A 138-amino-acid chain; its full sequence is Basic phospholipase A2 chain HDP-2P (138 aa).

The N-terminal stretch at 1 to 16 is a signal peptide; the sequence is MRILWIVAVCLIGVEG. 7 disulfide bridges follow: Cys-42–Cys-131, Cys-44–Cys-60, Cys-59–Cys-111, Cys-65–Cys-138, Cys-66–Cys-104, Cys-73–Cys-97, and Cys-91–Cys-102. Positions 43, 45, and 47 each coordinate Ca(2+). His-63 is a catalytic residue. Residue Asp-64 participates in Ca(2+) binding. Asp-105 is an active-site residue.

In terms of assembly, heterodimer of an acidic and a basic chain; non-covalently linked. The toxic basic protein has phospholipase A2 activity (chain HDP-2P) and the non-toxic acidic protein functions as its inhibitor (chain HPD-1I (AC A4VBF0)). Ca(2+) is required as a cofactor. In terms of tissue distribution, expressed by the venom gland.

It localises to the secreted. It catalyses the reaction a 1,2-diacyl-sn-glycero-3-phosphocholine + H2O = a 1-acyl-sn-glycero-3-phosphocholine + a fatty acid + H(+). Its activity is regulated as follows. Enzymatic activity and neurotoxicity are inhibited by Triton X-100. Triton X-100 has been determined to be located in the center of the hydrophobic channel of the enzyme. Functionally, monomer: snake venom phospholipase A2 (PLA2) that affects neuromuscular transmission presynaptically. It has catalytic activity, anticoagulant activity and weakly inhibits ADP-induced platelet aggregation. PLA2 catalyzes the calcium-dependent hydrolysis of the 2-acyl groups in 3-sn-phosphoglycerides. Heterodimer: shows the same activities as the monomer, but with a lower potency. In Vipera nikolskii (Nikolsky's adder), this protein is Basic phospholipase A2 chain HDP-2P.